A 288-amino-acid polypeptide reads, in one-letter code: ATP synthase gamma chain (288 aa).

This sequence belongs to the ATPase gamma chain family. As to quaternary structure, F-type ATPases have 2 components, CF(1) - the catalytic core - and CF(0) - the membrane proton channel. CF(1) has five subunits: alpha(3), beta(3), gamma(1), delta(1), epsilon(1). CF(0) has three main subunits: a, b and c.

It localises to the cell membrane. Its function is as follows. Produces ATP from ADP in the presence of a proton gradient across the membrane. The gamma chain is believed to be important in regulating ATPase activity and the flow of protons through the CF(0) complex. This chain is ATP synthase gamma chain, found in Staphylococcus epidermidis (strain ATCC 35984 / DSM 28319 / BCRC 17069 / CCUG 31568 / BM 3577 / RP62A).